The sequence spans 405 residues: Glutamate-pyruvate aminotransferase AlaA (405 aa).

The L-alanine site is built by Gly-41 and Asn-179. Lys-240 is subject to N6-(pyridoxal phosphate)lysine. Arg-378 provides a ligand contact to L-alanine.

This sequence belongs to the class-I pyridoxal-phosphate-dependent aminotransferase family. As to quaternary structure, homodimer. Requires pyridoxal 5'-phosphate as cofactor.

Its subcellular location is the cytoplasm. It carries out the reaction L-alanine + 2-oxoglutarate = pyruvate + L-glutamate. Its pathway is amino-acid biosynthesis; L-alanine biosynthesis. Involved in the biosynthesis of alanine. Catalyzes the transamination of pyruvate by glutamate, leading to the formation of L-alanine and 2-oxoglutarate. Is also able to catalyze the reverse reaction. The sequence is that of Glutamate-pyruvate aminotransferase AlaA from Escherichia coli (strain K12).